We begin with the raw amino-acid sequence, 571 residues long: MNDPREILAVDPYNNITSDEEDEQAIARELEFMERKRQALVERLKRKQEFKKPQDPNFEAIEVPQSPTKNRVKVGSHNATQQGTKFEGSNINEVRLSQLQQQPKPPASTTTYFMEKFQNAKKNEDKQIAKFESMMNARVHTFSTDEKKYVPIITNELESFSNLWVKKRYIPEDDLKRALHEIKILRLGKLFAKIRPPKFQEPEYANWATVGLISHKSDIKFTSSEKPVKFFMFTITDFQHTLDVYIFGKKGVERYYNLRLGDVIAILNPEVLPWRPSGRGNFIKSFNLRISHDFKCILEIGSSRDLGWCPIVNKKTHKKCGSPINISLHKCCDYHREVQFRGTSAKRIELNGGYALGAPTKVDSQPSLYKAKGENGFNIIKGTRKRLSEEEERLKKSSHNFTNSNSAKAFFDEKFQNPDMLANLDNKRRKIIETKKSTALSRELGKIMRRRESSGLEDKSVGERQKMKRTTESALQTGLIQRLGFDPTHGKISQVLKSSVSGSEPKNNLLGKKKTVINDLLHYKKEKVILAPSKNEWFKKRSHREEVWQKHFGSKETKETSDGSASDLEII.

At Thr17 the chain carries Phosphothreonine. The residue at position 18 (Ser18) is a Phosphoserine. The segment at 309 to 335 is zinc finger-like; the sequence is CPIVNKKTHKKCGSPINISLHKCCDYH. The Bipartite nuclear localization signal motif lies at 435–451; that stretch reads KKSTALSRELGKIMRRR. Sufficient for nuclear localization regions lie at residues 435-512 and 453-553; these read KKST…LLGK and SSGL…KHFG. Positions 451–471 are enriched in basic and acidic residues; that stretch reads RESSGLEDKSVGERQKMKRTT. The disordered stretch occupies residues 451–473; that stretch reads RESSGLEDKSVGERQKMKRTTES. A phosphoserine mark is found at Ser453 and Ser454. A Bipartite nuclear localization signal motif is present at residues 512–527; it reads KKKTVINDLLHYKKEK. Basic and acidic residues predominate over residues 548 to 561; the sequence is WQKHFGSKETKETS. The disordered stretch occupies residues 548 to 571; sequence WQKHFGSKETKETSDGSASDLEII.

Belongs to the MCM10 family. Self-associates; assembles into large homomultimeric complexes of approximately 800 kDa. Associates with the MCM2-7 complex and the DNA polymerase alpha:primase complex. Interacts with ORC1, ORC2, MCM2, MCM3, CDC54/MCM4, MCM6, CDC47/MCM7, RFA2, CDC45, POL1, PRI2, POL12, SIR2 and SIR3. The diubiquitinated form interacts with POL30/PCNA C-terminus. Post-translationally, diubiquitinated in a cell cycle-regulated manner. Ubiquitination first appears in late G(1) and persists throughout S phase.

The protein resides in the nucleus. Required for DNA synthesis. Required for entry into or completion of S phase. Involved in DNA replication and seems to participate in the activation of the pre-replication complex (pre-RC) and in transcription elongation. May play a role as a key coordinator in assembling the replication fork. Proposed to function at replication origins following the binding of the MCM2-7 complex prior to the recruitment of CDC45. Probably is required to stimulate phosphorylation of the MCM2-7 complex by the CDC7-DBF4 kinase complex. May recruit the DNA polymerase alpha:primase complex to replication origins and is required to maintain it on chromatin independently of CDC45. May also play a role in transcriptional silencing. This Saccharomyces cerevisiae (strain ATCC 204508 / S288c) (Baker's yeast) protein is Minichromosome maintenance protein 10 (MCM10).